The primary structure comprises 124 residues: Small ribosomal subunit protein uS12 (124 aa).

The interval 1–32 (MPTIQQLVRKGRQAKASKTKTPALKGSPQRRG) is disordered. Basic residues predominate over residues 9–18 (RKGRQAKASK). The residue at position 89 (Asp89) is a 3-methylthioaspartic acid.

It belongs to the universal ribosomal protein uS12 family. In terms of assembly, part of the 30S ribosomal subunit. Contacts proteins S8 and S17. May interact with IF1 in the 30S initiation complex.

Its function is as follows. With S4 and S5 plays an important role in translational accuracy. Functionally, interacts with and stabilizes bases of the 16S rRNA that are involved in tRNA selection in the A site and with the mRNA backbone. Located at the interface of the 30S and 50S subunits, it traverses the body of the 30S subunit contacting proteins on the other side and probably holding the rRNA structure together. The combined cluster of proteins S8, S12 and S17 appears to hold together the shoulder and platform of the 30S subunit. This chain is Small ribosomal subunit protein uS12, found in Acidothermus cellulolyticus (strain ATCC 43068 / DSM 8971 / 11B).